The primary structure comprises 394 residues: L-lactate dehydrogenase (394 aa).

Residues 1-380 (MIISAASDYR…SRDSLVQNAE (380 aa)) form the FMN hydroxy acid dehydrogenase domain. Position 24 (Tyr-24) interacts with substrate. 2 residues coordinate FMN: Ser-106 and Gln-127. A substrate-binding site is contributed by Tyr-129. Thr-155 is a binding site for FMN. Residue Arg-164 coordinates substrate. Residue Lys-251 coordinates FMN. His-275 serves as the catalytic Proton acceptor. Arg-278 is a substrate binding site. 306–330 (DSGIRNGLDVVRMIALGADSVLLGR) is an FMN binding site.

It belongs to the FMN-dependent alpha-hydroxy acid dehydrogenase family. FMN is required as a cofactor.

It is found in the cell inner membrane. It catalyses the reaction (S)-lactate + A = pyruvate + AH2. Catalyzes the conversion of L-lactate to pyruvate. Is coupled to the respiratory chain. This chain is L-lactate dehydrogenase, found in Klebsiella pneumoniae subsp. pneumoniae (strain ATCC 700721 / MGH 78578).